Consider the following 76-residue polypeptide: DNA-directed RNA polymerase subunit epsilon (76 aa).

It belongs to the RNA polymerase subunit epsilon family. RNAP is composed of a core of 2 alpha, a beta and a beta' subunit. The core is associated with a delta subunit, and at least one of epsilon or omega. When a sigma factor is associated with the core the holoenzyme is formed, which can initiate transcription.

It catalyses the reaction RNA(n) + a ribonucleoside 5'-triphosphate = RNA(n+1) + diphosphate. Functionally, a non-essential component of RNA polymerase (RNAP). In Streptococcus thermophilus (strain CNRZ 1066), this protein is DNA-directed RNA polymerase subunit epsilon.